The primary structure comprises 172 residues: Ribosome maturation factor RimM (172 aa).

A PRC barrel domain is found at 96 to 168; sequence DGEFYYHEII…RIDVTVLEGL (73 aa).

Belongs to the RimM family. In terms of assembly, binds ribosomal protein uS19.

The protein localises to the cytoplasm. In terms of biological role, an accessory protein needed during the final step in the assembly of 30S ribosomal subunit, possibly for assembly of the head region. Essential for efficient processing of 16S rRNA. May be needed both before and after RbfA during the maturation of 16S rRNA. It has affinity for free ribosomal 30S subunits but not for 70S ribosomes. The chain is Ribosome maturation factor RimM from Streptococcus mutans serotype c (strain ATCC 700610 / UA159).